The following is a 396-amino-acid chain: Probable sugar efflux transporter (396 aa).

The next 12 helical transmembrane spans lie at 15 to 35 (VVTL…PVGL), 50 to 70 (VGIM…PFML), 81 to 101 (LICL…SWSF), 103 to 123 (VLVI…SITA), 136 to 156 (AQAL…GLPL), 170 to 190 (FFAI…LLPL), 209 to 229 (PALM…YTAY), 246 to 266 (FATA…VIFG), 275 to 295 (TLVS…LPAA), 299 to 319 (IHLG…GLGM), 333 to 353 (VAMA…ALVG), and 364 to 384 (MIGY…IIIF).

Belongs to the major facilitator superfamily. SotB (TC 2.A.1.2) family.

The protein resides in the cell inner membrane. Its function is as follows. Involved in the efflux of sugars. The physiological role may be the reduction of the intracellular concentration of toxic sugars or sugar metabolites. The polypeptide is Probable sugar efflux transporter (Escherichia coli (strain SMS-3-5 / SECEC)).